The chain runs to 251 residues: Regulator of G-protein signaling 9-binding protein B (251 aa).

The Cytoplasmic portion of the chain corresponds to M1–Q230. Coiled-coil stretches lie at residues H52–R94 and A158–N187. Residues L231–I250 form a helical; Anchor for type IV membrane protein membrane-spanning segment. Position 251 (L251) is a topological domain, extracellular.

The protein belongs to the RGS7BP/RGS9BP family.

It localises to the membrane. Functionally, regulator of G protein-coupled receptor (GPCR) signaling. Probably acts by regulating the activity of some 'R7' family protein (RGS6, RGS7, RGS9 and/or RGS11). The chain is Regulator of G-protein signaling 9-binding protein B (rgs9bp-b) from Xenopus laevis (African clawed frog).